A 201-amino-acid chain; its full sequence is Large ribosomal subunit protein uL4 (201 aa).

A disordered region spans residues 39-72 (RRGTASTKTRAQVSKSGKKMYSQKGTGNARHGDR). The span at 42–53 (TASTKTRAQVSK) shows a compositional bias: polar residues.

It belongs to the universal ribosomal protein uL4 family. As to quaternary structure, part of the 50S ribosomal subunit.

Functionally, one of the primary rRNA binding proteins, this protein initially binds near the 5'-end of the 23S rRNA. It is important during the early stages of 50S assembly. It makes multiple contacts with different domains of the 23S rRNA in the assembled 50S subunit and ribosome. Its function is as follows. Forms part of the polypeptide exit tunnel. This is Large ribosomal subunit protein uL4 from Deinococcus deserti (strain DSM 17065 / CIP 109153 / LMG 22923 / VCD115).